The following is a 307-amino-acid chain: Fructokinase (307 aa).

The protein belongs to the carbohydrate kinase PfkB family.

It carries out the reaction D-fructose + ATP = D-fructose 6-phosphate + ADP + H(+). The polypeptide is Fructokinase (scrK) (Vibrio alginolyticus).